We begin with the raw amino-acid sequence, 505 residues long: Maturase K (505 aa).

This sequence belongs to the intron maturase 2 family. MatK subfamily.

The protein localises to the plastid. Its subcellular location is the chloroplast. Usually encoded in the trnK tRNA gene intron. Probably assists in splicing its own and other chloroplast group II introns. In Physcomitrium patens (Spreading-leaved earth moss), this protein is Maturase K.